The sequence spans 394 residues: Elongation factor Tu (394 aa).

One can recognise a tr-type G domain in the interval Lys10 to Val204. The tract at residues Gly19–Thr26 is G1. Gly19–Thr26 is a binding site for GTP. Thr26 contributes to the Mg(2+) binding site. Residues Gly60 to Ser64 are G2. The segment at Asp81–Gly84 is G3. Residues Asp81–His85 and Asn136–Asp139 contribute to the GTP site. The G4 stretch occupies residues Asn136–Asp139. The G5 stretch occupies residues Ser174 to Leu176.

It belongs to the TRAFAC class translation factor GTPase superfamily. Classic translation factor GTPase family. EF-Tu/EF-1A subfamily. Monomer.

It is found in the cytoplasm. It catalyses the reaction GTP + H2O = GDP + phosphate + H(+). Functionally, GTP hydrolase that promotes the GTP-dependent binding of aminoacyl-tRNA to the A-site of ribosomes during protein biosynthesis. In Rickettsia helvetica, this protein is Elongation factor Tu.